Here is a 290-residue protein sequence, read N- to C-terminus: MSGNLDILALKDDDVNKMLAATTHVGSTSVNFQMESYVFKRRPDGVHIINLGRTWEKLLLAARCIASIEYPGEVFAISSRQFGQRAVLKFAHYTEATPIAGRFTPGAFTNQIQPAFREPRLLIVTDPLTDHQPVTEASYVNIPVIAFCNTDSPLKFVDIAIPCNTKSPHSIGLMWWLLAREVLKLRGKISDKWELKPDLFFYRDPEEQEKEQAALLEAAPAAKEMYTDEPIPAVEEGGNWGEEAAPAAPAAAAAVPAVAGAAIPQMIQADDWNEDETQTAGSWGGATGGF.

The protein belongs to the universal ribosomal protein uS2 family. Component of the small ribosomal subunit. Mature ribosomes consist of a small (40S) and a large (60S) subunit. The 40S subunit contains about 33 different proteins and 1 molecule of RNA (18S). The 60S subunit contains about 49 different proteins and 3 molecules of RNA (28S, 5.8S and 5S). Interacts with ribosomal protein S21.

The protein localises to the cytoplasm. Its function is as follows. Required for the assembly and/or stability of the 40S ribosomal subunit. Required for the processing of the 20S rRNA-precursor to mature 18S rRNA in a late step of the maturation of 40S ribosomal subunits. The sequence is that of Small ribosomal subunit protein uS2 from Culex quinquefasciatus (Southern house mosquito).